A 137-amino-acid chain; its full sequence is Small ribosomal subunit protein bS16m (137 aa).

Residues 1 to 34 (MVHLTTLLCKAYRGGHLTIRLALGGCTNRPFYRI) constitute a mitochondrion transit peptide. Thr130 carries the post-translational modification Phosphothreonine.

The protein belongs to the bacterial ribosomal protein bS16 family. As to quaternary structure, component of the mitochondrial ribosome small subunit (28S) which comprises a 12S rRNA and about 30 distinct proteins.

The protein resides in the mitochondrion. This is Small ribosomal subunit protein bS16m (MRPS16) from Pongo abelii (Sumatran orangutan).